A 146-amino-acid polypeptide reads, in one-letter code: MSHKILLVNGPNLNLLGRREPSVYGHQTLADIVAELNQQAKLAEVELEHIQSNAEFELINAIHATDAQMIIINPAAFTHTSVALRDALLGVAIPFFEVHLSNVHAREAFRHHSYFSDKAIGVICGFGSQGYEFALAAAIKRLNQPL.

The active-site Proton acceptor is Tyr-24. Substrate is bound by residues Asn-73, His-79, and Asp-86. His-99 serves as the catalytic Proton donor. Substrate-binding positions include 100-101 and Arg-110; that span reads LS.

Belongs to the type-II 3-dehydroquinase family. Homododecamer.

It catalyses the reaction 3-dehydroquinate = 3-dehydroshikimate + H2O. The protein operates within metabolic intermediate biosynthesis; chorismate biosynthesis; chorismate from D-erythrose 4-phosphate and phosphoenolpyruvate: step 3/7. Functionally, catalyzes a trans-dehydration via an enolate intermediate. In Shewanella baltica (strain OS195), this protein is 3-dehydroquinate dehydratase.